Consider the following 590-residue polypeptide: Glypican-3 (590 aa).

Residues Met-1–Ser-25 form the signal peptide. Intrachain disulfides connect Cys-30–Cys-67, Cys-60–Cys-255, Cys-68–Cys-258, Cys-190–Cys-342, Cys-245–Cys-278, Cys-267–Cys-418, and Cys-271–Cys-406. 2 N-linked (GlcNAc...) asparagine glycosylation sites follow: Asn-119 and Asn-234. Asn-414 carries an N-linked (GlcNAc...) asparagine glycan. Disordered regions lie at residues Pro-429–Pro-450 and Trp-476–Gly-520. Residues Thr-495–Cys-513 show a composition bias toward acidic residues. O-linked (Xyl...) (glycosaminoglycan) serine glycans are attached at residues Ser-504 and Ser-517.

It belongs to the glypican family. In terms of assembly, heterodimer; disulfide-linked. Cleavage by a furin-like convertase results in production of alpha and beta chains which form a disulfide-linked heterodimer. O-glycosylated; contains heparan sulfate and/or chondroitin sulfate. In terms of processing, cleaved intracellularly by a furin-like convertase to generate 2 subunits, alpha and beta, which remain associated through disulfide bonds and are associated with the cell surface via the GPI-anchor. This processing is essential for its role in inhibition of hedgehog signaling. A second proteolytic event may result in cleavage of the protein on the cell surface, separating it from the GPI-anchor and leading to its shedding from the cell surface. In terms of tissue distribution, maternally expressed and is almost ubiquitous during blastula and gastrula stages but becomes restricted to the prospective hindbrain by 24 hours post-fertilization.

Its subcellular location is the cell membrane. In terms of biological role, cell surface proteoglycan. Negatively regulates the hedgehog signaling pathway. Positively regulates the canonical and non-canonical Wnt signaling pathways. Binds to CD81 which decreases the availability of free CD81 for binding to the transcriptional repressor HHEX, resulting in nuclear translocation of HHEX and transcriptional repression. Inhibits the dipeptidyl peptidase activity of DPP4. Plays a role in limb patterning and skeletal development. Modulates the effects of growth factors on renal branching morphogenesis. Required for coronary vascular development. Plays a role in regulating cell movements during gastrulation. This Danio rerio (Zebrafish) protein is Glypican-3.